A 237-amino-acid polypeptide reads, in one-letter code: Chalcone--flavanone isomerase (237 aa).

T50 and S192 together coordinate substrate.

It belongs to the chalcone isomerase family.

It catalyses the reaction a chalcone = a flavanone.. Its pathway is secondary metabolite biosynthesis; flavonoid biosynthesis. Catalyzes the intramolecular cyclization of bicyclic chalcones into tricyclic (S)-flavanones. Responsible for the isomerization of 4,2',4',6'-tetrahydroxychalcone (also termed chalcone) into naringenin. This Callistephus chinensis (China aster) protein is Chalcone--flavanone isomerase (CHI).